The chain runs to 452 residues: Tripartite motif-containing protein 49D (452 aa).

The RING-type zinc finger occupies cysteine 15 to leucine 56. The B box-type zinc finger occupies serine 88–alanine 129. Zn(2+)-binding residues include cysteine 93, histidine 96, cysteine 115, and histidine 121. The region spanning glutamate 269–leucine 452 is the B30.2/SPRY domain.

The protein belongs to the TRIM/RBCC family.

The polypeptide is Tripartite motif-containing protein 49D (Homo sapiens (Human)).